Here is a 450-residue protein sequence, read N- to C-terminus: 3',5'-cyclic-AMP phosphodiesterase 7B (450 aa).

One can recognise a PDEase domain in the interval 97-420 (LDEDYLGQAR…AQWKSLLPRQ (324 aa)). The active-site Proton donor is the His173. 4 residues coordinate a divalent metal cation: His177, His213, Asp214, and Asp323. Residues 418 to 450 (PRQHRSRGSSGSGPDHDHAGQGTESEEQEGDSP) form a disordered region. The residue at position 426 (Ser426) is a Phosphoserine. Positions 441–450 (ESEEQEGDSP) are enriched in acidic residues.

Belongs to the cyclic nucleotide phosphodiesterase family. PDE7 subfamily. A divalent metal cation is required as a cofactor. In terms of tissue distribution, highly expressed in brain. Also expressed in heart, liver, skeletal muscle and pancreas.

The catalysed reaction is 3',5'-cyclic AMP + H2O = AMP + H(+). It functions in the pathway purine metabolism; 3',5'-cyclic AMP degradation; AMP from 3',5'-cyclic AMP: step 1/1. Inhibited by dipyridamole, IBMX and SCH 51866. Insensitive to zaprinast, rolipram, and milrinone. Hydrolyzes the second messenger cAMP, which is a key regulator of many important physiological processes. May be involved in the control of cAMP-mediated neural activity and cAMP metabolism in the brain. The protein is 3',5'-cyclic-AMP phosphodiesterase 7B of Homo sapiens (Human).